A 1441-amino-acid polypeptide reads, in one-letter code: Protein clueless (1441 aa).

2 disordered regions span residues Met1–Thr79 and Val106–Ser131. Over residues Lys8–Lys22 the composition is skewed to polar residues. The segment covering Ala54 to Asn63 has biased composition (basic residues). Composition is skewed to low complexity over residues Lys64–Thr79 and Val106–Ser126. Ser273 carries the post-translational modification Phosphoserine. Residues Arg427–Leu669 enclose the Clu domain. Residues Lys726 to Glu753 show a composition bias toward basic and acidic residues. 2 disordered regions span residues Lys726–Lys769 and Glu961–Thr1009. A compositionally biased stretch (basic residues) spans Lys964 to Ser977. A compositionally biased stretch (low complexity) spans Lys978–Thr1009. TPR repeat units lie at residues Ala1109–Val1142, Ala1235–Tyr1268, and Gly1270–Thr1303.

It belongs to the CLU family.

The protein localises to the cytoplasm. In terms of biological role, mRNA-binding protein involved in proper cytoplasmic distribution of mitochondria. The polypeptide is Protein clueless (Drosophila willistoni (Fruit fly)).